Reading from the N-terminus, the 158-residue chain is Large ribosomal subunit protein uL11 (158 aa).

Belongs to the universal ribosomal protein uL11 family. In terms of assembly, part of the ribosomal stalk of the 50S ribosomal subunit. Interacts with L10 and the large rRNA to form the base of the stalk. L10 forms an elongated spine to which L12 dimers bind in a sequential fashion forming a multimeric L10(L12)X complex.

In terms of biological role, forms part of the ribosomal stalk which helps the ribosome interact with GTP-bound translation factors. In Methanoregula boonei (strain DSM 21154 / JCM 14090 / 6A8), this protein is Large ribosomal subunit protein uL11.